We begin with the raw amino-acid sequence, 505 residues long: MVSIRPDEISSILKQQITDYDQSVNVSNVGTVLQIGDGIARIYGLDQVMAGELLEFEDGTEGIALNLEDDNVGAVLMGEALGVQEGSNVKSTGKIASVPVGEAMKGRVVNPLGQPIDGKGEIPTSDNRLIEEMAPGIIKRRSVHEPMQTGITSIDAMIPVGRGQRELIIGDRQTGKTAIAIDTIINQKGQDVVCVYVAIGQKSASVANVVEVLREKGALEYTVVVSAGASEAAALQYLAPYTGAAIAEHFMYQGKATLVIYDDLTKQAQAYRQMSLLLRRPPGREAYPGDVFYCHSRLLERAAKLSDDMGGGSMTALPIIETQAGDVSAYIPTNVISITDGQIFLSADLFNSGLRPAINVGISVSRVGGAAQTKAIKKIAGTLKLELAQFDELAAFSQFASDLDEATQQQLERGKRLRELLKQAQFSPLNLAEQVAVVYAGVKGLIDEVPVEDVTKFAAELREYLKLNKAEFIEEILKEKKLNEGLETTLKEVIKEVKSSMLATV.

Residue 170-177 (GDRQTGKT) participates in ATP binding.

This sequence belongs to the ATPase alpha/beta chains family. In terms of assembly, F-type ATPases have 2 components, CF(1) - the catalytic core - and CF(0) - the membrane proton channel. CF(1) has five subunits: alpha(3), beta(3), gamma(1), delta(1), epsilon(1). CF(0) has four main subunits: a(1), b(1), b'(1) and c(9-12).

The protein localises to the cellular thylakoid membrane. The enzyme catalyses ATP + H2O + 4 H(+)(in) = ADP + phosphate + 5 H(+)(out). Functionally, produces ATP from ADP in the presence of a proton gradient across the membrane. The alpha chain is a regulatory subunit. The chain is ATP synthase subunit alpha from Prochlorococcus marinus subsp. pastoris (strain CCMP1986 / NIES-2087 / MED4).